Here is a 350-residue protein sequence, read N- to C-terminus: Fe(2+) transport protein 2 (350 aa).

A signal peptide spans 1–21; the sequence is MATTKLVYILLILFTFTVSPA. Topologically, residues 22–47 are extracellular; sequence ISTAPEHCDSGFDNPCINKAKALPLK. A helical membrane pass occupies residues 48 to 68; sequence IVAIVAILTTSLIGVTSPLFS. At 69–80 the chain is on the cytoplasmic side; sequence RYISFLRPDGNG. The chain crosses the membrane as a helical span at residues 81 to 101; that stretch reads FMIVKCFSSGIILGTGFMHVL. The Extracellular portion of the chain corresponds to 102–120; that stretch reads PDSFEMLSSKCLSDNPWHK. A helical transmembrane segment spans residues 121 to 141; it reads FPFAGFVAMMSGLVTLAIDSI. Residues 142–195 are Cytoplasmic-facing; sequence TTSLYTGKNSVGPVPDEEYGIDQEKAIHMVGHNHSHGHGVVLATKDDGQLLRYQ. The helical transmembrane segment at 196 to 216 threads the bilayer; sequence VIAMVLEVGILFHSVVIGLSL. Residues 217 to 227 are Extracellular-facing; it reads GATNDSCTIKG. A helical transmembrane segment spans residues 228-248; it reads LIIALCFHHLFEGIGLGGCIL. Topologically, residues 249-257 are cytoplasmic; it reads QADFTNVKK. A helical transmembrane segment spans residues 258-278; that stretch reads FLMAFFFTGTTPCGIFLGIAL. The Extracellular portion of the chain corresponds to 279-289; that stretch reads SSIYRDNSPTA. Residues 290 to 310 traverse the membrane as a helical segment; that stretch reads LITIGLLNACSAGMLIYMALV. The Cytoplasmic portion of the chain corresponds to 311–329; it reads DLLATEFMGSMLQGSIKLQ. Residues 330-350 traverse the membrane as a helical segment; that stretch reads IKCFTAALLGCAVMSVVAVWA.

The protein belongs to the ZIP transporter (TC 2.A.5) family. In terms of tissue distribution, expressed in the external cell layers of the root subapical zone.

The protein localises to the cell membrane. High-affinity iron transporter that mediates under iron-deficiency the iron uptake from the rhizosphere across the plasma membrane in the root epidermal layer. Could also be capable of transporting zinc ions. This is Fe(2+) transport protein 2 (IRT2) from Arabidopsis thaliana (Mouse-ear cress).